The following is a 471-amino-acid chain: L-amino acid dehydrogenase (471 aa).

Residue Gly-31 coordinates Mg(2+). Ser-33 contacts FAD. A Mg(2+)-binding site is contributed by Gly-34. FAD-binding residues include Glu-52, Arg-60, and Val-256. Ala-283 serves as a coordination point for Mg(2+). Phe-453 is an FAD binding site.

It belongs to the flavin monoamine oxidase family. It depends on FAD as a cofactor. The cofactor is Mg(2+).

The protein localises to the cellular thylakoid membrane. The catalysed reaction is a plastoquinone + an L-alpha-amino acid + H2O = a plastoquinol + a 2-oxocarboxylate + NH4(+). It catalyses the reaction a plastoquinone + L-arginine + H2O = a plastoquinol + 5-guanidino-2-oxopentanoate + NH4(+). Its pathway is amino-acid degradation; L-arginine degradation. Its activity is regulated as follows. Inhibited by Ca(2+) and other cations such as Ni(2+), Co(2+) and Zn(2+). The inhibition by o-phenanthroline and salicylhydroxamic acid suggests the presence of a metal cofactor besides FAD in the enzyme. The L-arginine-stimulated O(2) consumption involving slr0782 is inhibited by inhibitors of the respiratory electron transport chain, such as KCN and 2,5-dibromo-3-methyl-6-isopropyl-p-benzoquinone, which indicates a participation of the cytochrome b6/f complex and of a cytochrome oxidase. Its function is as follows. L-amino acid dehydrogenase with broad substrate specificity. Catalyzes the oxidative deamination of various L-amino acids, L-Arg and L-Cys being the best substrates in vitro. Likely functions mainly as an L-arginine dehydrogenase in vivo. Probably feeds electrons from L-arginine oxidation and also from the oxidation of other L-amino acids into the respiratory electron transport chain associated to the thylakoid membrane, and does not directly interact with molecular oxygen but donates electrons to the plastoquinone pool. Cannot use D-amino acids as substrates. This is L-amino acid dehydrogenase from Synechocystis sp. (strain ATCC 27184 / PCC 6803 / Kazusa).